The following is a 190-amino-acid chain: NADH-ubiquinone oxidoreductase 75 kDa subunit, mitochondrial (190 aa).

This sequence belongs to the complex I 75 kDa subunit family. In terms of assembly, core subunit of respiratory chain NADH dehydrogenase (Complex I) which is composed of 45 different subunits. This is the largest subunit of complex I and it is a component of the iron-sulfur (IP) fragment of the enzyme. Complex I associates with ubiquinol-cytochrome reductase complex (Complex III) to form supercomplexes. Interacts with MDM2 and AKAP1. [2Fe-2S] cluster is required as a cofactor. Requires [4Fe-4S] cluster as cofactor.

Its subcellular location is the mitochondrion inner membrane. The catalysed reaction is a ubiquinone + NADH + 5 H(+)(in) = a ubiquinol + NAD(+) + 4 H(+)(out). Core subunit of the mitochondrial membrane respiratory chain NADH dehydrogenase (Complex I) which catalyzes electron transfer from NADH through the respiratory chain, using ubiquinone as an electron acceptor. Essential for catalysing the entry and efficient transfer of electrons within complex I. Plays a key role in the assembly and stability of complex I and participates in the association of complex I with ubiquinol-cytochrome reductase complex (Complex III) to form supercomplexes. This Mesocricetus auratus (Golden hamster) protein is NADH-ubiquinone oxidoreductase 75 kDa subunit, mitochondrial.